Reading from the N-terminus, the 356-residue chain is S-adenosylmethionine:tRNA ribosyltransferase-isomerase (356 aa).

Belongs to the QueA family. Monomer.

It localises to the cytoplasm. The catalysed reaction is 7-aminomethyl-7-carbaguanosine(34) in tRNA + S-adenosyl-L-methionine = epoxyqueuosine(34) in tRNA + adenine + L-methionine + 2 H(+). It participates in tRNA modification; tRNA-queuosine biosynthesis. Functionally, transfers and isomerizes the ribose moiety from AdoMet to the 7-aminomethyl group of 7-deazaguanine (preQ1-tRNA) to give epoxyqueuosine (oQ-tRNA). The polypeptide is S-adenosylmethionine:tRNA ribosyltransferase-isomerase (Escherichia coli O1:K1 / APEC).